The following is a 1124-amino-acid chain: Probable leucine-rich repeat receptor-like protein kinase At2g33170 (1124 aa).

The first 32 residues, 1 to 32 (MGWWIFEFKKESKSMFVGVLFLLTLLVWTSES), serve as a signal peptide directing secretion. Topologically, residues 33–752 (LNSDGQFLLE…LKAGSARRGR (720 aa)) are extracellular. N-linked (GlcNAc...) asparagine glycosylation is found at N72, N96, and N131. LRR repeat units follow at residues 86 to 109 (VVTS…GGLV), 110 to 132 (NLVY…IGNC), 134 to 156 (KLEV…INKL), 158 to 180 (QLRS…IGDL), 182 to 205 (NLEE…GNLN), 206 to 228 (KLTT…IGKC), 230 to 252 (NLKL…IGML), 254 to 277 (KLQE…GNLT), 278 to 300 (SLET…IGNM), 302 to 325 (SLKK…GKLS), 326 to 348 (KVME…LSKI), 350 to 371 (ELRL…ELSK), 374 to 397 (NLAK…QNLT), 398 to 420 (SMRQ…LGLY), 422 to 444 (PLWV…ICQQ), 446 to 468 (NLIL…VLRC), 470 to 491 (SLLQ…ELCK), 494 to 516 (NLSA…IGTC), 518 to 540 (KLQR…ISKL), 542 to 564 (NLVT…IANC), 566 to 588 (MLQR…LGSL), 590 to 613 (QLEI…GNLT), 614 to 636 (HLTE…LGLL), 638 to 661 (SLQI…IGNL), 663 to 686 (LLMY…ENLS), and 687 to 709 (SLLG…QIFQ). The N-linked (GlcNAc...) asparagine glycan is linked to N192. A glycan (N-linked (GlcNAc...) asparagine) is linked at N275. N314 carries N-linked (GlcNAc...) asparagine glycosylation. A glycan (N-linked (GlcNAc...) asparagine) is linked at N395. Residue N494 is glycosylated (N-linked (GlcNAc...) asparagine). The N-linked (GlcNAc...) asparagine glycan is linked to N547. The N-linked (GlcNAc...) asparagine glycan is linked to N611. 5 N-linked (GlcNAc...) asparagine glycosylation sites follow: N644, N684, N692, N697, and N710. Residues 753-773 (IIIIVSSVIGGISLLLIAIVV) traverse the membrane as a helical segment. Residues 774 to 1124 (HFLRNPVEPT…CSDLPPPAPP (351 aa)) lie on the Cytoplasmic side of the membrane. A phosphothreonine mark is found at T808 and T816. The region spanning 819 to 1100 (FHDSYIVGRG…TMREVVLMLI (282 aa)) is the Protein kinase domain. Residues 825-833 (VGRGACGTV) and K847 each bind ATP. Phosphotyrosine is present on residues Y901 and Y939. D952 acts as the Proton acceptor in catalysis. Phosphoserine is present on S986. Y994 and Y1001 each carry phosphotyrosine. At T1002 the chain carries Phosphothreonine.

It belongs to the protein kinase superfamily. Ser/Thr protein kinase family.

The protein resides in the membrane. It carries out the reaction L-seryl-[protein] + ATP = O-phospho-L-seryl-[protein] + ADP + H(+). The catalysed reaction is L-threonyl-[protein] + ATP = O-phospho-L-threonyl-[protein] + ADP + H(+). In Arabidopsis thaliana (Mouse-ear cress), this protein is Probable leucine-rich repeat receptor-like protein kinase At2g33170.